Reading from the N-terminus, the 54-residue chain is Ovomucoid (54 aa).

The Kazal-like domain occupies 4 to 54 (VDCSGYPQSACPQDYVPFCGSDNKTYSNKCNFCNAVADSNGTLTLSHFGKC). 3 cysteine pairs are disulfide-bonded: Cys6/Cys36, Cys14/Cys33, and Cys22/Cys54. The N-linked (GlcNAc...) asparagine glycan is linked to Asn43.

The protein resides in the secreted. This chain is Ovomucoid, found in Gallirallus australis (Weka).